The chain runs to 1385 residues: Kinesin-like protein KIF15 (1385 aa).

Residues 1–24 form a disordered region; that stretch reads MAPGCKSELRNVTNSHSNQPSNED. The span at 10–21 shows a compositional bias: polar residues; the sequence is RNVTNSHSNQPS. In terms of domain architecture, Kinesin motor spans 26–363; it reads AIKVFVRIRP…LNFAQRAKLI (338 aa). 109-116 provides a ligand contact to ATP; it reads GQTGSGKT. A coiled-coil region spans residues 368–1385; the sequence is VVNEDTQGNV…NVFLKERKKE (1018 aa). Position 1007 is an N6-acetyllysine (Lys1007). A phosphoserine mark is found at Ser1139 and Ser1167. The interval 1222-1243 is disordered; it reads DMKRQGESSSQSRPDSQQLKNE. The segment covering 1228–1241 has biased composition (polar residues); the sequence is ESSSQSRPDSQQLK.

It belongs to the TRAFAC class myosin-kinesin ATPase superfamily. Kinesin family. KLP2 subfamily. Interacts with MKI67 and TPX2. Expressed in sympathetic neurons.

The protein resides in the cytoplasm. It is found in the cytoskeleton. It localises to the spindle. Functionally, plus-end directed kinesin-like motor enzyme involved in mitotic spindle assembly. The chain is Kinesin-like protein KIF15 (Kif15) from Rattus norvegicus (Rat).